The following is a 165-amino-acid chain: UPF0254 protein MMP0935 (165 aa).

It belongs to the UPF0254 family.

In Methanococcus maripaludis (strain DSM 14266 / JCM 13030 / NBRC 101832 / S2 / LL), this protein is UPF0254 protein MMP0935.